The sequence spans 552 residues: MRSDAMKTGLARAPHRSLLKAMGLTETEIERPIIGVVNAHNELIPGHIHLNNLVEAVKAGVRLAGGTPLEFPTIGVCDGLAMNHVGMKYSLASRELIADMIEVMAMAHPFDALVFIPNCDKIVPGMLMAAARLNLPAIFISGGPMLAGRYQGRDVSLSTMFEAVGAVQAGKMTEQELAALEDCACPGCGSCAGMFTANTMNCMVEALGMGLPGNGTTPAVSGSRVRLAKEAGMQVMKLLQENIRPLDIMTATAFRNAVAVDMALGGSTNTCLHLPAIAHEAGVKLDLNTFNEINRRTPQICKLSPAGSQHIQDLDEAGGIPAVMNELYRHGLIDGSALTVTGRTVADNVSGRVVSRREVIRPVEDPYSREGGLAVLYGNLAPEGAVVKKGAVLPEMMRHEGPARVFNSEEEAFAAIMGKQIKPGDVVVIRYEGPRGGPGMQEMLSPTAALAGMGLDSSVALITDGRFSGASRGASIGHVSPEAAAGGLIALVEEGDIIAIDIEAGKLELKVPEEEIARRRQNWQAPPPKITGGYLGRYARMVTSGARGAVLE.

Mg(2+) is bound at residue Asp78. Cys119 provides a ligand contact to [2Fe-2S] cluster. Mg(2+) contacts are provided by Asp120 and Lys121. An N6-carboxylysine modification is found at Lys121. Residue Cys191 participates in [2Fe-2S] cluster binding. Glu442 lines the Mg(2+) pocket. Ser468 functions as the Proton acceptor in the catalytic mechanism.

Belongs to the IlvD/Edd family. In terms of assembly, homodimer. The cofactor is [2Fe-2S] cluster. Requires Mg(2+) as cofactor.

The catalysed reaction is (2R)-2,3-dihydroxy-3-methylbutanoate = 3-methyl-2-oxobutanoate + H2O. It carries out the reaction (2R,3R)-2,3-dihydroxy-3-methylpentanoate = (S)-3-methyl-2-oxopentanoate + H2O. It participates in amino-acid biosynthesis; L-isoleucine biosynthesis; L-isoleucine from 2-oxobutanoate: step 3/4. Its pathway is amino-acid biosynthesis; L-valine biosynthesis; L-valine from pyruvate: step 3/4. Functionally, functions in the biosynthesis of branched-chain amino acids. Catalyzes the dehydration of (2R,3R)-2,3-dihydroxy-3-methylpentanoate (2,3-dihydroxy-3-methylvalerate) into 2-oxo-3-methylpentanoate (2-oxo-3-methylvalerate) and of (2R)-2,3-dihydroxy-3-methylbutanoate (2,3-dihydroxyisovalerate) into 2-oxo-3-methylbutanoate (2-oxoisovalerate), the penultimate precursor to L-isoleucine and L-valine, respectively. This Moorella thermoacetica (strain ATCC 39073 / JCM 9320) protein is Dihydroxy-acid dehydratase.